We begin with the raw amino-acid sequence, 185 residues long: Large ribosomal subunit protein uL22 (185 aa).

It belongs to the universal ribosomal protein uL22 family. As to quaternary structure, part of the 50S ribosomal subunit.

Its function is as follows. This protein binds specifically to 23S rRNA. It makes multiple contacts with different domains of the 23S rRNA in the assembled 50S subunit and ribosome. The globular domain of the protein is located near the polypeptide exit tunnel on the outside of the subunit, while an extended beta-hairpin is found that lines the wall of the exit tunnel in the center of the 70S ribosome. The polypeptide is Large ribosomal subunit protein uL22 (Pyrobaculum neutrophilum (strain DSM 2338 / JCM 9278 / NBRC 100436 / V24Sta) (Thermoproteus neutrophilus)).